The primary structure comprises 142 residues: Putative 2'-deoxynucleoside 5'-phosphate N-hydrolase 1 (142 aa).

Substrate-binding positions include 4–10 (FFSGSIR), Tyr19, His36, Glu82, and 106–108 (SAM).

This sequence belongs to the 2'-deoxynucleoside 5'-phosphate N-hydrolase 1 family. Monomer and homodimer.

The enzyme catalyses a pyrimidine 2'-deoxyribonucleoside 5'-phosphate + H2O = a pyrimidine nucleobase + 2-deoxy-D-ribose 5-phosphate. It carries out the reaction a purine 2'-deoxyribonucleoside 5'-phosphate + H2O = a purine nucleobase + 2-deoxy-D-ribose 5-phosphate. Its function is as follows. Catalyzes the cleavage of the N-glycosidic bond of deoxyribonucleoside 5'-monophosphates to yield deoxyribose 5-phosphate and a purine or pyrimidine base. The protein is Putative 2'-deoxynucleoside 5'-phosphate N-hydrolase 1 of Syntrophotalea carbinolica (strain DSM 2380 / NBRC 103641 / GraBd1) (Pelobacter carbinolicus).